Reading from the N-terminus, the 393-residue chain is Eukaryotic translation initiation factor 5 (393 aa).

Residue 28–35 coordinates GTP; that stretch reads GKGNGIKT. 2 disordered regions span residues 144–179 and 217–247; these read KAVSTKSTHDEALAQQPQIKKEKKSKKKKDDDDEED and EPQSAKEEQDEDDEQEEGQEKESDPVSSISS. The region spanning 223-385 is the W2 domain; sequence EEQDEDDEQE…ETAEEEEEDE (163 aa). Acidic residues predominate over residues 224–233; the sequence is EQDEDDEQEE.

This sequence belongs to the eIF-2-beta/eIF-5 family.

In terms of biological role, catalyzes the hydrolysis of GTP bound to the 40S ribosomal initiation complex (40S.mRNA.Met-tRNA[F].eIF-2.GTP) with the subsequent joining of a 60S ribosomal subunit resulting in the release of eIF-2 and the guanine nucleotide. The subsequent joining of a 60S ribosomal subunit results in the formation of a functional 80S initiation complex (80S.mRNA.Met-tRNA[F]). This chain is Eukaryotic translation initiation factor 5 (eif5), found in Dictyostelium discoideum (Social amoeba).